A 925-amino-acid chain; its full sequence is Isoleucine--tRNA ligase (925 aa).

Positions 57–67 (PYANGDIHIGH) match the 'HIGH' region motif. E553 contacts L-isoleucyl-5'-AMP. The 'KMSKS' region motif lies at 594-598 (KMSKS). K597 is an ATP binding site. Zn(2+) contacts are provided by C889, C892, C909, and C912.

This sequence belongs to the class-I aminoacyl-tRNA synthetase family. IleS type 1 subfamily. As to quaternary structure, monomer. Zn(2+) serves as cofactor.

It is found in the cytoplasm. The catalysed reaction is tRNA(Ile) + L-isoleucine + ATP = L-isoleucyl-tRNA(Ile) + AMP + diphosphate. Catalyzes the attachment of isoleucine to tRNA(Ile). As IleRS can inadvertently accommodate and process structurally similar amino acids such as valine, to avoid such errors it has two additional distinct tRNA(Ile)-dependent editing activities. One activity is designated as 'pretransfer' editing and involves the hydrolysis of activated Val-AMP. The other activity is designated 'posttransfer' editing and involves deacylation of mischarged Val-tRNA(Ile). This chain is Isoleucine--tRNA ligase, found in Brevibacillus brevis (strain 47 / JCM 6285 / NBRC 100599).